We begin with the raw amino-acid sequence, 156 residues long: Interleukin-36 receptor antagonist protein (156 aa).

A disulfide bridge links C9 with C155.

It belongs to the IL-1 family. As to quaternary structure, interacts with cargo receptor TMED10; the interaction mediates the translocation from the cytoplasm into the ERGIC (endoplasmic reticulum-Golgi intermediate compartment) and thereby secretion. Removal of N-terminal methionine is necessary for full antagonistic activity. As to expression, highly abundant in embryonic tissue and tissues containing epithelial cells.

Its subcellular location is the cytoplasm. The protein localises to the secreted. Inhibits the activity of interleukin-36 (IL36A,IL36B and IL36G) by binding to receptor IL1RL2/IL-36R and preventing its association with the coreceptor IL1RAP for signaling. Part of the IL-36 signaling system that is thought to be present in epithelial barriers and to take part in local inflammatory response; similar to the IL-1 system with which it shares the coreceptor. Proposed to play a role in skin inflammation. May be involved in the innate immune response to fungal pathogens. May activate an anti-inflammatory signaling pathway by recruiting SIGIRR. The polypeptide is Interleukin-36 receptor antagonist protein (Mus musculus (Mouse)).